Here is a 397-residue protein sequence, read N- to C-terminus: Acetate kinase 2 (397 aa).

Mg(2+) is bound at residue Asn-8. Lys-15 is a binding site for ATP. Arg-89 contributes to the substrate binding site. Asp-146 functions as the Proton donor/acceptor in the catalytic mechanism. ATP contacts are provided by residues 206–210 (HLGNG), 281–283 (DLR), and 329–333 (GIGEN). Glu-382 serves as a coordination point for Mg(2+).

Belongs to the acetokinase family. As to quaternary structure, homodimer. The cofactor is Mg(2+). Mn(2+) serves as cofactor.

It is found in the cytoplasm. The catalysed reaction is acetate + ATP = acetyl phosphate + ADP. It functions in the pathway metabolic intermediate biosynthesis; acetyl-CoA biosynthesis; acetyl-CoA from acetate: step 1/2. Functionally, catalyzes the formation of acetyl phosphate from acetate and ATP. Can also catalyze the reverse reaction. The sequence is that of Acetate kinase 2 from Listeria monocytogenes serotype 4b (strain F2365).